A 93-amino-acid chain; its full sequence is Large ribosomal subunit protein bL31B (93 aa).

It belongs to the bacterial ribosomal protein bL31 family. Type B subfamily. In terms of assembly, part of the 50S ribosomal subunit.

This Psychrobacter arcticus (strain DSM 17307 / VKM B-2377 / 273-4) protein is Large ribosomal subunit protein bL31B.